Consider the following 945-residue polypeptide: Glutamyl aminopeptidase (945 aa).

Residues 1–18 (MNFAEEEPSKKYCIKGKH) are Cytoplasmic-facing. A helical; Signal-anchor for type II membrane protein membrane pass occupies residues 19–39 (VAIICGVVVAVGLIVGLSVGL). At 40 to 945 (TRSCEQDTTP…SIREWFASLP (906 aa)) the chain is on the extracellular side. A disordered region spans residues 43–77 (CEQDTTPAPSQPPPEASTALPPQDQNVCPDSEDES). N-linked (GlcNAc...) asparagine glycosylation is found at Asn-116 and Asn-189. Substrate is bound at residue Glu-215. An N-linked (GlcNAc...) asparagine glycan is attached at Asn-316. 349–353 (GAMEN) contacts substrate. His-385 contacts Zn(2+). Residue Glu-386 is the Proton acceptor of the active site. Positions 389 and 408 each coordinate Zn(2+). N-linked (GlcNAc...) asparagine glycans are attached at residues Asn-546, Asn-601, Asn-637, Asn-669, Asn-754, and Asn-792. Arg-878 is a substrate binding site.

This sequence belongs to the peptidase M1 family. In terms of assembly, homodimer; disulfide-linked. The cofactor is Zn(2+). As to expression, early B-lineage cells and certain stromal cell of hemopoietic tissues. Also expressed by capillary endothelial cells, placenta, and epithelial cells of the intestine and proximal renal tubules.

The protein localises to the cell membrane. The catalysed reaction is Release of N-terminal glutamate (and to a lesser extent aspartate) from a peptide.. Its activity is regulated as follows. Substrate specificity is modulated by calcium which enhances the enzymatic activity for cleavage of acidic residues while reducing its activity with basic residues. Inhibited by aminopeptidase inhibitors amastatin and bestatin. Regulates central hypertension through its calcium-modulated preference to cleave N-terminal acidic residues from peptides such as angiotensin II. This is Glutamyl aminopeptidase (Enpep) from Mus musculus (Mouse).